Consider the following 206-residue polypeptide: Ribosomal RNA small subunit methyltransferase G (206 aa).

Residues glycine 73, leucine 78, 124 to 125 (VE), and arginine 139 each bind S-adenosyl-L-methionine.

Belongs to the methyltransferase superfamily. RNA methyltransferase RsmG family.

The protein resides in the cytoplasm. It carries out the reaction guanosine(527) in 16S rRNA + S-adenosyl-L-methionine = N(7)-methylguanosine(527) in 16S rRNA + S-adenosyl-L-homocysteine. Its function is as follows. Specifically methylates the N7 position of guanine in position 527 of 16S rRNA. The sequence is that of Ribosomal RNA small subunit methyltransferase G from Pectobacterium atrosepticum (strain SCRI 1043 / ATCC BAA-672) (Erwinia carotovora subsp. atroseptica).